Reading from the N-terminus, the 588-residue chain is Adenine deaminase (588 aa).

The protein belongs to the metallo-dependent hydrolases superfamily. Adenine deaminase family. In terms of assembly, homodimer. The cofactor is Mn(2+).

The enzyme catalyses adenine + H2O + H(+) = hypoxanthine + NH4(+). The polypeptide is Adenine deaminase (Escherichia coli O9:H4 (strain HS)).